The following is a 589-amino-acid chain: Protein kinase G11A (589 aa).

Residues 1 to 167 are disordered; sequence MASKAMPRAP…SACSSISSVT (167 aa). Composition is skewed to polar residues over residues 15 to 36, 46 to 55, and 63 to 76; these read NLQS…SPSK, AESSKPNSEV, and TQHQ…TGSN. The segment covering 91–100 has biased composition (basic and acidic residues); the sequence is RLADEEKGVV. Low complexity predominate over residues 142 to 165; sequence SSSRCRPSTSSDVSDESACSSISS. A Protein kinase domain is found at 195–533; that stretch reads FKLLKKLGCG…ATEIKQHPFF (339 aa). ATP contacts are provided by residues 201–209 and lysine 224; that span reads LGCGDIGSV. Aspartate 320 serves as the catalytic Proton acceptor. Residues 551–589 are disordered; it reads RPVEIERPPKQPVSTSEPAAAPSDAAQKSSDSYLEFDFF.

The protein belongs to the protein kinase superfamily. Ser/Thr protein kinase family.

The catalysed reaction is L-seryl-[protein] + ATP = O-phospho-L-seryl-[protein] + ADP + H(+). It catalyses the reaction L-threonyl-[protein] + ATP = O-phospho-L-threonyl-[protein] + ADP + H(+). Its function is as follows. May play a role in the regulation of metabolism and signal transduction processes. The chain is Protein kinase G11A from Oryza sativa subsp. indica (Rice).